A 190-amino-acid polypeptide reads, in one-letter code: UPF0398 protein LAR_0869 (190 aa).

Belongs to the UPF0398 family.

The polypeptide is UPF0398 protein LAR_0869 (Limosilactobacillus reuteri subsp. reuteri (strain JCM 1112) (Lactobacillus reuteri)).